The following is a 129-amino-acid chain: Small ribosomal subunit protein uS11 (129 aa).

It belongs to the universal ribosomal protein uS11 family. As to quaternary structure, part of the 30S ribosomal subunit. Interacts with proteins S7 and S18. Binds to IF-3.

Located on the platform of the 30S subunit, it bridges several disparate RNA helices of the 16S rRNA. Forms part of the Shine-Dalgarno cleft in the 70S ribosome. This is Small ribosomal subunit protein uS11 from Thermosipho melanesiensis (strain DSM 12029 / CIP 104789 / BI429).